Here is a 379-residue protein sequence, read N- to C-terminus: Protein RecA (379 aa).

79-86 provides a ligand contact to ATP; the sequence is GPESSGKT.

The protein belongs to the RecA family.

Its subcellular location is the cytoplasm. Can catalyze the hydrolysis of ATP in the presence of single-stranded DNA, the ATP-dependent uptake of single-stranded DNA by duplex DNA, and the ATP-dependent hybridization of homologous single-stranded DNAs. It interacts with LexA causing its activation and leading to its autocatalytic cleavage. This chain is Protein RecA, found in Streptococcus agalactiae serotype III (strain NEM316).